Here is a 66-residue protein sequence, read N- to C-terminus: Large ribosomal subunit protein bL35 (66 aa).

This sequence belongs to the bacterial ribosomal protein bL35 family.

In Brucella anthropi (strain ATCC 49188 / DSM 6882 / CCUG 24695 / JCM 21032 / LMG 3331 / NBRC 15819 / NCTC 12168 / Alc 37) (Ochrobactrum anthropi), this protein is Large ribosomal subunit protein bL35.